We begin with the raw amino-acid sequence, 232 residues long: Ribose-5-phosphate isomerase A (232 aa).

Substrate-binding positions include 31-34 (TGST), 87-90 (DGAD), and 100-103 (KGGG). Glu109 serves as the catalytic Proton acceptor. Lys127 is a binding site for substrate.

Belongs to the ribose 5-phosphate isomerase family. As to quaternary structure, homodimer.

It carries out the reaction aldehydo-D-ribose 5-phosphate = D-ribulose 5-phosphate. It functions in the pathway carbohydrate degradation; pentose phosphate pathway; D-ribose 5-phosphate from D-ribulose 5-phosphate (non-oxidative stage): step 1/1. In terms of biological role, catalyzes the reversible conversion of ribose-5-phosphate to ribulose 5-phosphate. The sequence is that of Ribose-5-phosphate isomerase A from Bifidobacterium longum subsp. infantis (strain ATCC 15697 / DSM 20088 / JCM 1222 / NCTC 11817 / S12).